The chain runs to 272 residues: Cell division protein FtsQ (272 aa).

Over 1 to 43 the chain is Cytoplasmic; that stretch reads MEYNPPNTRERIVARRQRMRRNSTEPVVPGWRWRLREGLRSGR. A helical transmembrane segment spans residues 44-64; that stretch reads IVSGIVFVISCFALFYVLFSS. Topologically, residues 65-272 are extracellular; the sequence is RFRVQTVEVV…FYQYRPDGSS (208 aa). One can recognise a POTRA domain in the interval 66–133; the sequence is FRVQTVEVVG…DRARIVIVER (68 aa).

This sequence belongs to the FtsQ/DivIB family. FtsQ subfamily.

The protein resides in the cell membrane. Essential cell division protein. This Chloroflexus aurantiacus (strain ATCC 29366 / DSM 635 / J-10-fl) protein is Cell division protein FtsQ.